Here is a 291-residue protein sequence, read N- to C-terminus: 33 kDa chaperonin (291 aa).

2 cysteine pairs are disulfide-bonded: cysteine 235–cysteine 237 and cysteine 268–cysteine 271.

The protein belongs to the HSP33 family. Under oxidizing conditions two disulfide bonds are formed involving the reactive cysteines. Under reducing conditions zinc is bound to the reactive cysteines and the protein is inactive.

The protein resides in the cytoplasm. Redox regulated molecular chaperone. Protects both thermally unfolding and oxidatively damaged proteins from irreversible aggregation. Plays an important role in the bacterial defense system toward oxidative stress. This chain is 33 kDa chaperonin, found in Bacillus pumilus (strain SAFR-032).